The following is a 95-amino-acid chain: Small ribosomal subunit protein bS18 (95 aa).

The protein belongs to the bacterial ribosomal protein bS18 family. In terms of assembly, part of the 30S ribosomal subunit. Forms a tight heterodimer with protein bS6.

Functionally, binds as a heterodimer with protein bS6 to the central domain of the 16S rRNA, where it helps stabilize the platform of the 30S subunit. The sequence is that of Small ribosomal subunit protein bS18 from Rickettsia prowazekii (strain Madrid E).